The primary structure comprises 170 residues: Cytidine diphosphoramidate kinase (170 aa).

It belongs to the APS kinase family.

It carries out the reaction cytidine 5'-diphosphoramidate + ATP = cytidine 3'-phospho-5'-diphosphoramidate + ADP + H(+). The protein operates within capsule biogenesis; capsule polysaccharide biosynthesis. Functionally, involved in the biosynthesis of the O-methyl phosphoramidate (MeOPN) group found on the capsular polysaccharide (CPS) of C.jejuni. Catalyzes the ATP-dependent phosphorylation of cytidine diphosphoramidate (CDP-NH(2)) to form cytidine 3'-phosphate 5'-diphosphoramidate. Can also use other substrates such as the corresponding adenine and uridine diphosphoramidate derivatives or cytidine diphosphoramidate analogs, with lower efficiency. This chain is Cytidine diphosphoramidate kinase, found in Campylobacter jejuni subsp. jejuni serotype O:2 (strain ATCC 700819 / NCTC 11168).